We begin with the raw amino-acid sequence, 330 residues long: Ketol-acid reductoisomerase (NADP(+)) (330 aa).

One can recognise a KARI N-terminal Rossmann domain in the interval 1–181; that stretch reads MNVYYEQDAD…GGTKAGVIET (181 aa). NADP(+) contacts are provided by residues 24-27, R47, S50, S52, and 82-85; these read YGSQ and DQNQ. H107 is an active-site residue. G133 lines the NADP(+) pocket. In terms of domain architecture, KARI C-terminal knotted spans 182–327; it reads SIKNETETDL…AKLRDMMSWL (146 aa). Positions 190, 194, 226, and 230 each coordinate Mg(2+). S251 is a substrate binding site.

The protein belongs to the ketol-acid reductoisomerase family. Mg(2+) is required as a cofactor.

The catalysed reaction is (2R)-2,3-dihydroxy-3-methylbutanoate + NADP(+) = (2S)-2-acetolactate + NADPH + H(+). The enzyme catalyses (2R,3R)-2,3-dihydroxy-3-methylpentanoate + NADP(+) = (S)-2-ethyl-2-hydroxy-3-oxobutanoate + NADPH + H(+). It participates in amino-acid biosynthesis; L-isoleucine biosynthesis; L-isoleucine from 2-oxobutanoate: step 2/4. Its pathway is amino-acid biosynthesis; L-valine biosynthesis; L-valine from pyruvate: step 2/4. In terms of biological role, involved in the biosynthesis of branched-chain amino acids (BCAA). Catalyzes an alkyl-migration followed by a ketol-acid reduction of (S)-2-acetolactate (S2AL) to yield (R)-2,3-dihydroxy-isovalerate. In the isomerase reaction, S2AL is rearranged via a Mg-dependent methyl migration to produce 3-hydroxy-3-methyl-2-ketobutyrate (HMKB). In the reductase reaction, this 2-ketoacid undergoes a metal-dependent reduction by NADPH to yield (R)-2,3-dihydroxy-isovalerate. The polypeptide is Ketol-acid reductoisomerase (NADP(+)) (Pelodictyon phaeoclathratiforme (strain DSM 5477 / BU-1)).